The primary structure comprises 545 residues: Membrane protein insertase YidC (545 aa).

Residues 6–26 (LILFSALVLVLFLMWDAWQTD) traverse the membrane as a helical segment. Residues 34-59 (PPPPQPTASSGESSPVLPEAVPDAPP) form a disordered region. Transmembrane regions (helical) follow at residues 357 to 377 (LVGN…LVFF), 428 to 448 (GGCL…WMLL), and 505 to 525 (PVMF…YWVV).

The protein belongs to the OXA1/ALB3/YidC family. Type 1 subfamily. Interacts with the Sec translocase complex via SecD. Specifically interacts with transmembrane segments of nascent integral membrane proteins during membrane integration.

It is found in the cell inner membrane. Its function is as follows. Required for the insertion and/or proper folding and/or complex formation of integral membrane proteins into the membrane. Involved in integration of membrane proteins that insert both dependently and independently of the Sec translocase complex, as well as at least some lipoproteins. Aids folding of multispanning membrane proteins. This is Membrane protein insertase YidC from Nitrosococcus oceani (strain ATCC 19707 / BCRC 17464 / JCM 30415 / NCIMB 11848 / C-107).